Here is a 205-residue protein sequence, read N- to C-terminus: Small ribosomal subunit protein uS4 (205 aa).

The disordered stretch occupies residues 14 to 49 (RMGENIWGRPKSPVNRREYGPGQHGQRRKGKMSDFG). Residues 94–157 (SRLDAIVYRA…KQLVTVLEAV (64 aa)) form the S4 RNA-binding domain.

This sequence belongs to the universal ribosomal protein uS4 family. Part of the 30S ribosomal subunit. Contacts protein S5. The interaction surface between S4 and S5 is involved in control of translational fidelity.

In terms of biological role, one of the primary rRNA binding proteins, it binds directly to 16S rRNA where it nucleates assembly of the body of the 30S subunit. With S5 and S12 plays an important role in translational accuracy. This Agrobacterium fabrum (strain C58 / ATCC 33970) (Agrobacterium tumefaciens (strain C58)) protein is Small ribosomal subunit protein uS4.